The chain runs to 242 residues: Small ribosomal subunit protein uS2 (242 aa).

It belongs to the universal ribosomal protein uS2 family.

This Shewanella sediminis (strain HAW-EB3) protein is Small ribosomal subunit protein uS2.